A 2422-amino-acid polypeptide reads, in one-letter code: Non-reducing polyketide synthase trt4 (2422 aa).

Positions Val14 to Gln196 are N-terminal acylcarrier protein transacylase domain (SAT). The disordered stretch occupies residues Val289–Thr314. Residues Asn297 to Pro312 are compositionally biased toward polar residues. Positions Thr329–Glu745 constitute a Ketosynthase family 3 (KS3) domain. Residues Cys494, His629, and His668 each act as for beta-ketoacyl synthase activity in the active site. The tract at residues Leu856–Ala1121 is malonyl-CoA:ACP transacylase (MAT) domain. Ser904 serves as the catalytic For acyl/malonyl transferase activity. The N-terminal hotdog fold stretch occupies residues Pro1190 to Asn1316. The 306-residue stretch at Pro1190–Lys1495 folds into the PKS/mFAS DH domain. The product template (PT) domain stretch occupies residues Ser1191–Leu1494. Residue His1221 is the Proton acceptor; for dehydratase activity of the active site. The tract at residues Ser1345–Lys1495 is C-terminal hotdog fold. The active-site Proton donor; for dehydratase activity is the Asp1402. One can recognise a Carrier domain in the interval Ser1535–Gly1612. Residue Ser1572 is modified to O-(pantetheine 4'-phosphoryl)serine. Residues Ala1615–Pro1636 are disordered. Residues Gln1774–Asn2007 form a methyltransferase (CMeT) domain region. A thioesterase (TE) domain region spans residues Asn2036 to Tyr2383. Active-site for thioesterase activity residues include Ser2159, Asp2320, and His2352.

The catalysed reaction is 3 malonyl-CoA + acetyl-CoA + 2 S-adenosyl-L-methionine = 3,5-dimethylorsellinate + 2 S-adenosyl-L-homocysteine + 3 CO2 + 4 CoA. It participates in secondary metabolite biosynthesis; terpenoid biosynthesis. In terms of biological role, non-reducing polyketide synthase; part of the gene cluster that mediates the biosynthesis of terretonin, a fungal meroterpenoid that acts as a mycotoxin. The first step of the pathway is the synthesis of 3,5-dimethylorsellinic acid (DMOA) by the polyketide synthase trt4. DMOA is then prenylated into farnesyl-DMOA by the polyprenyl transferase trt2. Methylation by the methyltransferase trt5 then leads to farnesyl-DMOA methyl ester which is further subject to epoxidation by the FAD-dependent monooxygenase trt8 to yield epoxyfarnesyl-DMOA methyl ester. Cyclization of epoxyfarnesyl-DMOA methyl ester by the terpene cyclase trt1 leads to a tetracycle intermediate which is in turn converted to preterretonin. Dehydrogenase trt9 comes next to transform preterretonin to preterrenoid. The FAD-dependent monooxygenase trt3 is then required for the C-hydroxylation at C16 of preterrenoid to yield terrenoid. The cytochrome P450 trt6 catalyzes three successive oxidations to transform terrenoid into an unstable intermediate, which then undergoes the D-ring expansion and unusual rearrangement of the methoxy group to afford the core skeleton of terretonin. Trt14 catalyzes the D-ring expansion of terretonin involving intramolecular methoxy rearrangement as well as the hydrolysis of the expanded D-ring and the methyl ester moiety. Finally, the nonheme iron-dependent dioxygenase trt7 accomplishes the last two oxidation reactions steps to complete the biosynthesis of terretonin. Terretonin C is produced via spontaneous decarboxylation of the terretonin precursor. Another shunt product of the terretonin biosynthesis is dihydrofarnesyl-DMOA, derived from epoxyfarnesyl-DMOA through hydrolysis of the epoxide. This is Non-reducing polyketide synthase trt4 from Aspergillus terreus (strain NIH 2624 / FGSC A1156).